A 380-amino-acid polypeptide reads, in one-letter code: Chromo domain-containing protein 2 (380 aa).

Disordered regions lie at residues 14–58 (ISES…SLYG) and 100–156 (KLSP…VPLN). Residues 33-52 (NSINNKSSTASLESPQNGSW) are compositionally biased toward polar residues. Residues 108–119 (EDSEDKKEEDES) show a composition bias toward acidic residues. Over residues 121–140 (SYKNEFKSSSSASVSSNFEK) the composition is skewed to low complexity. The region spanning 176-238 (FAVEMILDSR…SRGGKPDLSS (63 aa)) is the Chromo domain. Positions 250–273 (SNEASYVEKDESSNSDDSISYKRR) are disordered.

The protein resides in the nucleus. Its function is as follows. Component of the kinetochore which plays a role in stabilizing microtubules and so allowing accurate chromosome segregation. In Schizosaccharomyces pombe (strain 972 / ATCC 24843) (Fission yeast), this protein is Chromo domain-containing protein 2 (chp2).